The chain runs to 204 residues: GTP cyclohydrolase-2 (204 aa).

49-53 (RIHSE) contacts GTP. Zn(2+)-binding residues include Cys-54, Cys-65, and Cys-67. GTP-binding positions include Gln-70, 92-94 (EGR), and Thr-114. Asp-126 (proton acceptor) is an active-site residue. Catalysis depends on Arg-128, which acts as the Nucleophile. The GTP site is built by Thr-149 and Lys-154.

It belongs to the GTP cyclohydrolase II family. Requires Zn(2+) as cofactor.

It catalyses the reaction GTP + 4 H2O = 2,5-diamino-6-hydroxy-4-(5-phosphoribosylamino)-pyrimidine + formate + 2 phosphate + 3 H(+). The protein operates within cofactor biosynthesis; riboflavin biosynthesis; 5-amino-6-(D-ribitylamino)uracil from GTP: step 1/4. In terms of biological role, catalyzes the conversion of GTP to 2,5-diamino-6-ribosylamino-4(3H)-pyrimidinone 5'-phosphate (DARP), formate and pyrophosphate. This is GTP cyclohydrolase-2 from Shewanella baltica (strain OS155 / ATCC BAA-1091).